The following is a 334-amino-acid chain: MSLDINQIALHQLIKRDEQNLELILRDSLLEPGNTVTEMMAELHRVYSAKSKAYGLFNEESELAEALRQCRRGDEDFLAFSRAATGRLRDELAKYPFAEGGIVLFCHYRYLAVEYLLVAVLNNLSSMRVNEQLDISTTHYLDINHADIVARIDLTEWETNPESTRYLTFLKGRVGRKVADFFMDFLGASVGLDTKAQNRGLLQALDDFTAEAQLDKAERQNVRAQVYSYCNEQLQAGEEIALSELSKELPSFGEKSFQEFTAEQGYELEETFPADRSTLRQLTKYAGSGGGLTINFDAMLLGERIFWDPATDTLTIKGTPPNLRDQLQRRTSGK.

It belongs to the YejK family.

It localises to the cytoplasm. The protein resides in the nucleoid. This Cronobacter sakazakii (strain ATCC BAA-894) (Enterobacter sakazakii) protein is Nucleoid-associated protein ESA_01050.